The chain runs to 164 residues: UPF0114 protein Avin_40830 (164 aa).

Helical transmembrane passes span Leu15–Phe35, Leu53–Val73, Gly103–Phe125, and Leu136–Leu156.

The protein belongs to the UPF0114 family.

It localises to the cell membrane. This chain is UPF0114 protein Avin_40830, found in Azotobacter vinelandii (strain DJ / ATCC BAA-1303).